Here is a 49-residue protein sequence, read N- to C-terminus: Soritesidine (49 aa).

The protein resides in the secreted. Very potent toxin that exhibits a wide range of toxicities over various organisms and cells including brine shrimp larvae (Artemia salina), sea hare eggs (Aplysia kurodai), mice, and cultured mammalian cells. An SOR-containing fraction cleaves plasmid DNA in a bivalent metal ion dependent manner suggesting genotoxicity of SOR. The sequence is that of Soritesidine from Spongosorites sp. (strain QM G324170) (Okinawan marine Sponge).